The sequence spans 301 residues: uncharacterized protein (301 aa).

The N-terminal stretch at 1–28 is a signal peptide; that stretch reads MFFREDKSVAFRLRSAALSGCATGQSDA.

This is an uncharacterized protein from Treponema pallidum (strain Nichols).